A 691-amino-acid polypeptide reads, in one-letter code: Pleckstrin homology domain-containing family G member 7 (691 aa).

Disordered regions lie at residues 1 to 48 and 109 to 140; these read MEKT…ISTS and TSEP…LQPV. One can recognise a DH domain in the interval 313 to 488; sequence MIFMNTLRYL…EGKVKWLDNF (176 aa). N395 carries N-linked (GlcNAc...) asparagine glycosylation. A PH domain is found at 535–668; it reads HLLYEGKLTL…WMAQITTAIS (134 aa).

The sequence is that of Pleckstrin homology domain-containing family G member 7 from Homo sapiens (Human).